A 356-amino-acid chain; its full sequence is Homoserine O-acetyltransferase (356 aa).

Positions 49–337 (VLICHALTGS…KSTHGHDAFL (289 aa)) constitute an AB hydrolase-1 domain. The Nucleophile role is filled by serine 143. Arginine 212 contributes to the substrate binding site. Catalysis depends on residues aspartate 304 and histidine 333. Residue aspartate 334 coordinates substrate.

It belongs to the AB hydrolase superfamily. MetX family. As to quaternary structure, homodimer.

The protein localises to the cytoplasm. It catalyses the reaction L-homoserine + acetyl-CoA = O-acetyl-L-homoserine + CoA. It functions in the pathway amino-acid biosynthesis; L-methionine biosynthesis via de novo pathway; O-acetyl-L-homoserine from L-homoserine: step 1/1. Transfers an acetyl group from acetyl-CoA to L-homoserine, forming acetyl-L-homoserine. This chain is Homoserine O-acetyltransferase, found in Nostoc punctiforme (strain ATCC 29133 / PCC 73102).